The sequence spans 443 residues: Exodeoxyribonuclease 7 large subunit (443 aa).

The protein belongs to the XseA family. In terms of assembly, heterooligomer composed of large and small subunits.

The protein localises to the cytoplasm. The enzyme catalyses Exonucleolytic cleavage in either 5'- to 3'- or 3'- to 5'-direction to yield nucleoside 5'-phosphates.. Bidirectionally degrades single-stranded DNA into large acid-insoluble oligonucleotides, which are then degraded further into small acid-soluble oligonucleotides. The polypeptide is Exodeoxyribonuclease 7 large subunit (Vibrio parahaemolyticus serotype O3:K6 (strain RIMD 2210633)).